Consider the following 143-residue polypeptide: Large ribosomal subunit protein uL11 (143 aa).

Belongs to the universal ribosomal protein uL11 family. In terms of assembly, part of the ribosomal stalk of the 50S ribosomal subunit. Interacts with L10 and the large rRNA to form the base of the stalk. L10 forms an elongated spine to which L12 dimers bind in a sequential fashion forming a multimeric L10(L12)X complex. Post-translationally, one or more lysine residues are methylated.

Its function is as follows. Forms part of the ribosomal stalk which helps the ribosome interact with GTP-bound translation factors. The polypeptide is Large ribosomal subunit protein uL11 (Koribacter versatilis (strain Ellin345)).